The sequence spans 396 residues: Elongation factor Tu (396 aa).

A tr-type G domain is found at 10–206 (KPHVNVGTIG…ALDSFIPEPT (197 aa)). A G1 region spans residues 19 to 26 (GHVDHGKT). 19 to 26 (GHVDHGKT) contacts GTP. Threonine 26 contacts Mg(2+). Positions 60–64 (GITIS) are G2. Residues 81–84 (DCPG) form a G3 region. Residues 81 to 85 (DCPGH) and 136 to 139 (NKAD) each bind GTP. Positions 136–139 (NKAD) are G4. The tract at residues 174–176 (SAR) is G5.

It belongs to the TRAFAC class translation factor GTPase superfamily. Classic translation factor GTPase family. EF-Tu/EF-1A subfamily. Monomer.

It localises to the cytoplasm. It carries out the reaction GTP + H2O = GDP + phosphate + H(+). Its function is as follows. GTP hydrolase that promotes the GTP-dependent binding of aminoacyl-tRNA to the A-site of ribosomes during protein biosynthesis. In Xanthomonas euvesicatoria pv. vesicatoria (strain 85-10) (Xanthomonas campestris pv. vesicatoria), this protein is Elongation factor Tu.